We begin with the raw amino-acid sequence, 325 residues long: Tetraacyldisaccharide 4'-kinase (325 aa).

An ATP-binding site is contributed by 55–62 (TAGGNGKT).

This sequence belongs to the LpxK family.

The catalysed reaction is a lipid A disaccharide + ATP = a lipid IVA + ADP + H(+). It participates in glycolipid biosynthesis; lipid IV(A) biosynthesis; lipid IV(A) from (3R)-3-hydroxytetradecanoyl-[acyl-carrier-protein] and UDP-N-acetyl-alpha-D-glucosamine: step 6/6. In terms of biological role, transfers the gamma-phosphate of ATP to the 4'-position of a tetraacyldisaccharide 1-phosphate intermediate (termed DS-1-P) to form tetraacyldisaccharide 1,4'-bis-phosphate (lipid IVA). In Salmonella typhi, this protein is Tetraacyldisaccharide 4'-kinase.